We begin with the raw amino-acid sequence, 219 residues long: uncharacterized protein (219 aa).

2 helical membrane-spanning segments follow: residues 81–101 (VVKW…NYLI) and 168–188 (PIME…TALV).

The protein resides in the membrane. This is an uncharacterized protein from Saccharomyces cerevisiae (strain ATCC 204508 / S288c) (Baker's yeast).